A 212-amino-acid chain; its full sequence is MKKIAVLISGQGTNLQTIIDACHSGDIPAKIACVISNKADAYGLVRAKQAQIPQAVFLRKNFSNNLEMDDAIGDYLQSLAVDLIVLAGYMKILTPKFTQRFAGKILNIHPSLLPKYAGLNTYQRAIEAGDNEHGTTVHFVNEEVDGGAIVLQAKVPIFPEDSIEEVEARTREQEYQIYPLVIKWFTEGRLRLKDNLAYLDGKALPKSGYANE.

12-14 (GTN) is a binding site for N(1)-(5-phospho-beta-D-ribosyl)glycinamide. (6R)-10-formyltetrahydrofolate-binding positions include 90-93 (MKIL) and Asn107. The active-site Proton donor is His109.

It belongs to the GART family.

It carries out the reaction N(1)-(5-phospho-beta-D-ribosyl)glycinamide + (6R)-10-formyltetrahydrofolate = N(2)-formyl-N(1)-(5-phospho-beta-D-ribosyl)glycinamide + (6S)-5,6,7,8-tetrahydrofolate + H(+). The protein operates within purine metabolism; IMP biosynthesis via de novo pathway; N(2)-formyl-N(1)-(5-phospho-D-ribosyl)glycinamide from N(1)-(5-phospho-D-ribosyl)glycinamide (10-formyl THF route): step 1/1. Its function is as follows. Catalyzes the transfer of a formyl group from 10-formyltetrahydrofolate to 5-phospho-ribosyl-glycinamide (GAR), producing 5-phospho-ribosyl-N-formylglycinamide (FGAR) and tetrahydrofolate. The polypeptide is Phosphoribosylglycinamide formyltransferase (Haemophilus influenzae (strain ATCC 51907 / DSM 11121 / KW20 / Rd)).